A 238-amino-acid polypeptide reads, in one-letter code: 1-(5-phosphoribosyl)-5-[(5-phosphoribosylamino)methylideneamino] imidazole-4-carboxamide isomerase (238 aa).

The active-site Proton acceptor is aspartate 8. The active-site Proton donor is the aspartate 129.

It belongs to the HisA/HisF family.

It localises to the cytoplasm. It carries out the reaction 1-(5-phospho-beta-D-ribosyl)-5-[(5-phospho-beta-D-ribosylamino)methylideneamino]imidazole-4-carboxamide = 5-[(5-phospho-1-deoxy-D-ribulos-1-ylimino)methylamino]-1-(5-phospho-beta-D-ribosyl)imidazole-4-carboxamide. It participates in amino-acid biosynthesis; L-histidine biosynthesis; L-histidine from 5-phospho-alpha-D-ribose 1-diphosphate: step 4/9. The sequence is that of 1-(5-phosphoribosyl)-5-[(5-phosphoribosylamino)methylideneamino] imidazole-4-carboxamide isomerase from Lacticaseibacillus casei (strain BL23) (Lactobacillus casei).